The sequence spans 341 residues: GTPase Obg (341 aa).

Residues 1 to 159 (MKFVDEALIK…RNLRLELRVL (159 aa)) form the Obg domain. Residues 128 to 150 (TRYKSSVNRSPRQTTPGSPGESR) form a disordered region. Polar residues predominate over residues 129–144 (RYKSSVNRSPRQTTPG). The 175-residue stretch at 160-334 (ADVGLLGLPN…LCYALMQLID (175 aa)) folds into the OBG-type G domain. Residues 166-173 (GLPNAGKS), 191-195 (FTTLH), 213-216 (DIPG), 283-286 (NKID), and 315-317 (SAI) contribute to the GTP site. Mg(2+)-binding residues include S173 and T193.

Belongs to the TRAFAC class OBG-HflX-like GTPase superfamily. OBG GTPase family. Monomer. It depends on Mg(2+) as a cofactor.

The protein localises to the cytoplasm. Functionally, an essential GTPase which binds GTP, GDP and possibly (p)ppGpp with moderate affinity, with high nucleotide exchange rates and a fairly low GTP hydrolysis rate. Plays a role in control of the cell cycle, stress response, ribosome biogenesis and in those bacteria that undergo differentiation, in morphogenesis control. The polypeptide is GTPase Obg (Legionella pneumophila (strain Lens)).